Consider the following 259-residue polypeptide: UPF0246 protein PBPRA0561 (259 aa).

The protein belongs to the UPF0246 family.

The chain is UPF0246 protein PBPRA0561 from Photobacterium profundum (strain SS9).